A 1025-amino-acid chain; its full sequence is Interferon-induced helicase C domain-containing protein 1 (1025 aa).

2 CARD domains span residues 7 to 97 (AEDS…YVKP) and 110 to 190 (AHDE…QTGN). Residues K23 and K43 each participate in a glycyl lysine isopeptide (Lys-Gly) (interchain with G-Cter in ISG15) cross-link. Positions 273–297 (SLGHNSNMGRDSGTMGSDSDESVIQ) are disordered. Positions 275-297 (GHNSNMGRDSGTMGSDSDESVIQ) are enriched in polar residues. S289, S291, and S302 each carry phosphoserine. Residues 317 to 510 (AQPALDGKNI…SEAEKHILNI (194 aa)) form the Helicase ATP-binding domain. A phosphoserine mark is found at S645 and S648. In terms of domain architecture, Helicase C-terminal spans 700–872 (KLIKLRNTIL…NMKPEEYAHK (173 aa)). The residue at position 828 (S828) is a Phosphoserine; by RIOK3. The RLR CTR domain occupies 893 to 1020 (AKQYNDNPSL…PDLDYSEYCL (128 aa)). Zn(2+)-binding residues include C907, C910, C962, and C964.

Belongs to the helicase family. RLR subfamily. In terms of assembly, monomer in the absence of ligands and homodimerizes in the presence of dsRNA ligands. Can assemble into helical or linear polymeric filaments on long dsRNA. Interacts with MAVS/IPS1. Interacts (via the CARD domains) with TKFC, the interaction is inhibited by viral infection. Interacts with PCBP2. Interacts with NLRC5. Interacts with PIAS2-beta. Interacts with DDX60. Interacts with ANKRD17. Interacts with IKBKE. Interacts with ATG5 and ATG12, either as ATG5 and ATG12 monomers or as ATG12-ATG5 conjugates. Interacts with ZCCHC3; leading to activate IFIH1/MDA5. Interacts with RNF123. Interacts with DDX3X. Interacts with NOD1; this interaction promotes transcription of antiviral genes and inhibition of viral replication. Interacts with ECSIT; this interaction bridges IFIH1 to the MAVS complex at the mitochondrion. In terms of processing, during apoptosis, processed into 3 cleavage products. The helicase-containing fragment, once liberated from the CARD domains, translocate from the cytoplasm to the nucleus. The processed protein significantly sensitizes cells to DNA degradation. Post-translationally, sumoylated. Sumoylation positively regulates its role in type I interferon induction and is enhanced by PIAS2-beta. Ubiquitinated by RNF125, leading to its degradation by the proteasome. USP17/UPS17L2-dependent deubiquitination positively regulates the receptor. Ubiquitinated by TRIM25 via 'Lys-63'-linked ubiquitination, promoting activation of IFIH1/MDA5. Ubiquitinated by TRIM40 via 'Lys-48'-linked ubiquitination; leading to proteasomal degradation. Ubiquitinated by TRIM65 via 'Lys-63'-linked ubiquitination, promoting activation of IFIH1/MDA5. In terms of processing, ISGylated by ISG15. ISGylation increases upon infection with viruses. ISGylation at Lys-23 and Lys-43 is dependent of dephosphorylation, regulates mitochondrial translocation and oligomerization. Essential for IFIH1/MDA5-mediated cytokine responses and restriction of virus replication. Post-translationally, phosphorylated. Dephosphorylated by phsophatases PP1; dephosphorylation precedes and is required for ISGylation. Expression is prominent in lung, liver, kidney, heart and spleen (at protein level). Widely expressed at low level.

Its subcellular location is the cytoplasm. The protein resides in the nucleus. It is found in the mitochondrion. The catalysed reaction is ATP + H2O = ADP + phosphate + H(+). Functionally, innate immune receptor which acts as a cytoplasmic sensor of viral nucleic acids and plays a major role in sensing viral infection and in the activation of a cascade of antiviral responses including the induction of type I interferons and pro-inflammatory cytokines. Its ligands include mRNA lacking 2'-O-methylation at their 5' cap and long-dsRNA (&gt;1 kb in length). Upon ligand binding it associates with mitochondria antiviral signaling protein (MAVS/IPS1) which activates the IKK-related kinases: TBK1 and IKBKE which phosphorylate interferon regulatory factors: IRF3 and IRF7 which in turn activate transcription of antiviral immunological genes, including interferons (IFNs); IFN-alpha and IFN-beta. Responsible for detecting the Picornaviridae family members such as encephalomyocarditis virus (EMCV), mengo encephalomyocarditis virus (ENMG), and theiler's murine encephalomyelitis virus (TMEV). Can also detect other viruses such as dengue virus (DENV), west Nile virus (WNV), and reovirus. Also involved in antiviral signaling in response to viruses containing a dsDNA genome, such as vaccinia virus. Plays an important role in amplifying innate immune signaling through recognition of RNA metabolites that are produced during virus infection by ribonuclease L (RNase L). May play an important role in enhancing natural killer cell function and may be involved in growth inhibition and apoptosis in several tumor cell lines. This chain is Interferon-induced helicase C domain-containing protein 1, found in Mus musculus (Mouse).